Consider the following 339-residue polypeptide: Aspartate carbamoyltransferase catalytic subunit (339 aa).

R69 and T70 together coordinate carbamoyl phosphate. K97 is a binding site for L-aspartate. Positions 119, 149, and 152 each coordinate carbamoyl phosphate. Residues R182 and R237 each contribute to the L-aspartate site. Carbamoyl phosphate contacts are provided by G278 and P279.

The protein belongs to the aspartate/ornithine carbamoyltransferase superfamily. ATCase family. In terms of assembly, heterododecamer (2C3:3R2) of six catalytic PyrB chains organized as two trimers (C3), and six regulatory PyrI chains organized as three dimers (R2).

The enzyme catalyses carbamoyl phosphate + L-aspartate = N-carbamoyl-L-aspartate + phosphate + H(+). The protein operates within pyrimidine metabolism; UMP biosynthesis via de novo pathway; (S)-dihydroorotate from bicarbonate: step 2/3. In terms of biological role, catalyzes the condensation of carbamoyl phosphate and aspartate to form carbamoyl aspartate and inorganic phosphate, the committed step in the de novo pyrimidine nucleotide biosynthesis pathway. In Hydrogenovibrio crunogenus (strain DSM 25203 / XCL-2) (Thiomicrospira crunogena), this protein is Aspartate carbamoyltransferase catalytic subunit.